A 337-amino-acid polypeptide reads, in one-letter code: Adenine deaminase (337 aa).

The Zn(2+) site is built by His17, His19, and His197. Glu200 serves as the catalytic Proton donor. Asp278 contributes to the Zn(2+) binding site. Residue Asp279 participates in substrate binding.

Belongs to the metallo-dependent hydrolases superfamily. Adenosine and AMP deaminases family. Adenine deaminase type 2 subfamily. It depends on Zn(2+) as a cofactor.

It catalyses the reaction adenine + H2O + H(+) = hypoxanthine + NH4(+). Catalyzes the hydrolytic deamination of adenine to hypoxanthine. Plays an important role in the purine salvage pathway and in nitrogen catabolism. The chain is Adenine deaminase from Zymomonas mobilis subsp. mobilis (strain ATCC 31821 / ZM4 / CP4).